Consider the following 107-residue polypeptide: Thioredoxin (107 aa).

Residues 2-107 (DSIVHVTDDS…QLTAFLDSNX (106 aa)) form the Thioredoxin domain. The cysteines at positions 32 and 35 are disulfide-linked.

It belongs to the thioredoxin family.

Its function is as follows. Participates in various redox reactions through the reversible oxidation of its active center dithiol to a disulfide and catalyzes dithiol-disulfide exchange reactions. This is Thioredoxin (trxA) from Allochromatium vinosum (Chromatium vinosum).